A 209-amino-acid polypeptide reads, in one-letter code: Ribonuclease HII (209 aa).

Residues 19–209 enclose the RNase H type-2 domain; the sequence is CIIVGVDEVG…LPGITKLYSK (191 aa). A divalent metal cation is bound by residues Asp-25, Glu-26, and Asp-118.

This sequence belongs to the RNase HII family. It depends on Mn(2+) as a cofactor. The cofactor is Mg(2+).

It localises to the cytoplasm. It catalyses the reaction Endonucleolytic cleavage to 5'-phosphomonoester.. In terms of biological role, endonuclease that specifically degrades the RNA of RNA-DNA hybrids. This Ehrlichia canis (strain Jake) protein is Ribonuclease HII.